Reading from the N-terminus, the 164-residue chain is Phosphopantetheine adenylyltransferase (164 aa).

Ser9 contacts substrate. Residues 9–10 (SF) and His17 contribute to the ATP site. The substrate site is built by Lys41, Leu73, and Lys87. ATP contacts are provided by residues 88–90 (GLR), Glu98, and 123–129 (YSYISSS).

It belongs to the bacterial CoaD family. As to quaternary structure, homohexamer. Mg(2+) serves as cofactor.

The protein localises to the cytoplasm. It carries out the reaction (R)-4'-phosphopantetheine + ATP + H(+) = 3'-dephospho-CoA + diphosphate. It participates in cofactor biosynthesis; coenzyme A biosynthesis; CoA from (R)-pantothenate: step 4/5. Reversibly transfers an adenylyl group from ATP to 4'-phosphopantetheine, yielding dephospho-CoA (dPCoA) and pyrophosphate. The protein is Phosphopantetheine adenylyltransferase of Clostridium perfringens (strain ATCC 13124 / DSM 756 / JCM 1290 / NCIMB 6125 / NCTC 8237 / Type A).